The primary structure comprises 295 residues: Methionine aminopeptidase (295 aa).

Substrate is bound at residue His-63. Positions 83, 94, and 154 each coordinate a divalent metal cation. His-162 lines the substrate pocket. Positions 188 and 281 each coordinate a divalent metal cation.

It belongs to the peptidase M24A family. Methionine aminopeptidase archaeal type 2 subfamily. Monomer. The cofactor is Fe(2+). Co(2+) is required as a cofactor. Ni(2+) serves as cofactor. Requires Mn(2+) as cofactor.

It carries out the reaction Release of N-terminal amino acids, preferentially methionine, from peptides and arylamides.. Removes the N-terminal methionine from nascent proteins. The N-terminal methionine is often cleaved when the second residue in the primary sequence is small and uncharged (Met-Ala-, Cys, Gly, Pro, Ser, Thr, or Val). The chain is Methionine aminopeptidase from Thermococcus onnurineus (strain NA1).